The chain runs to 140 residues: Short-chain diamines transporter (140 aa).

4 helical membrane passes run 7–27 (IFHA…AAAL), 36–56 (LALV…IYNL), 79–99 (VGFE…FLEI), and 105–125 (LMLE…FNWL).

This sequence belongs to the proteobacterial antimicrobial compound efflux (PACE) (TC 2.A.117) family.

The protein localises to the cell inner membrane. Functionally, mediates the efflux of short-chain diamines when energized by an electrochemical gradient. Confers resistance to chlorhexidine, benzalkonium, proflavine and acriflavine. Mediates efflux of both proflavine and acriflavine via an energy-dependent mechanism. The polypeptide is Short-chain diamines transporter (Vibrio parahaemolyticus serotype O3:K6 (strain RIMD 2210633)).